A 420-amino-acid chain; its full sequence is Zinc finger and BTB domain-containing protein 42 (420 aa).

A BTB domain is found at 24–92 (CDCTVLVGDA…MYEGRLDLHN (69 aa)). Disordered stretches follow at residues 127-204 (TRTL…HPPC) and 222-247 (VKAE…PPPV). Over residues 227-241 (DSFSEQDSSSPQSAD) the composition is skewed to low complexity. C2H2-type zinc fingers lie at residues 292 to 314 (CICP…LSAH), 332 to 354 (PTCP…ERTH), 360 to 382 (YTCV…AVVH), and 388 to 411 (HACR…RKFH).

Belongs to the krueppel C2H2-type zinc-finger protein family. ZBTB18 subfamily. Highly expressed in skeletal muscle and ovary (at protein level). Low expression in brain, lung, spleen, liver and heart (at protein level). Not detected in kidney and intestines (at protein level). Also observed in testis and, at lower levels, in stomach and nervous system.

Its subcellular location is the cytoplasm. The protein resides in the nucleus. It localises to the nucleoplasm. Functionally, transcriptional repressor. Specifically binds DNA and probably acts by recruiting chromatin remodeling multiprotein complexes. This chain is Zinc finger and BTB domain-containing protein 42 (Zbtb42), found in Mus musculus (Mouse).